The sequence spans 146 residues: Transcriptional repressor NrdR (146 aa).

The segment at 3-34 (CPFCQNPDTKVIDTRISDDGHSIRRRRVCPKC) is a zinc-finger region. One can recognise an ATP-cone domain in the interval 46 to 136 (LLVTKRSGGV…VYQNFAGLED (91 aa)).

Belongs to the NrdR family. Zn(2+) is required as a cofactor.

In terms of biological role, negatively regulates transcription of bacterial ribonucleotide reductase nrd genes and operons by binding to NrdR-boxes. This chain is Transcriptional repressor NrdR, found in Bifidobacterium longum (strain NCC 2705).